Consider the following 570-residue polypeptide: PTS system lactose-specific EIICB component (570 aa).

A PTS EIIC type-3 domain is found at 9-410 (IEKGKPFFEK…VVDIIIYYPF (402 aa)). Transmembrane regions (helical) follow at residues 31 to 51 (GFIS…IAYV), 65 to 85 (AILM…VAGT), 104 to 124 (INFI…ASDP), 133 to 153 (AFMG…TVIV), 178 to 198 (FKDL…DLVI), 223 to 243 (GWIG…VGIH), 283 to 303 (MFIV…MFMW), 340 to 360 (VFFI…KLFV), and 382 to 402 (IIMG…LIVV). One can recognise a PTS EIIB type-3 domain in the interval 467–570 (QTNVLVLCAG…LDFVQQQFEN (104 aa)). The active-site Phosphocysteine intermediate; for EIIB activity is Cys-474. At Cys-474 the chain carries Phosphocysteine; by EIIA.

The protein resides in the cell membrane. The enzyme catalyses lactose(out) + N(pros)-phospho-L-histidyl-[protein] = lactose 6-phosphate(in) + L-histidyl-[protein]. In terms of biological role, the phosphoenolpyruvate-dependent sugar phosphotransferase system (sugar PTS), a major carbohydrate active transport system, catalyzes the phosphorylation of incoming sugar substrates concomitantly with their translocation across the cell membrane. The enzyme II LacEF PTS system is involved in lactose transport, but can also use galactose, isopropyl beta-thio-galactopyranoside and thiomethyl beta-D-galactopyranoside (TMG) as substrates. This chain is PTS system lactose-specific EIICB component, found in Staphylococcus aureus.